The sequence spans 147 residues: SPI-1 type 3 secretion system pilotin (147 aa).

The signal sequence occupies residues 1-15 (MKKFYSCLPVFLLIG). Cys16 carries the N-palmitoyl cysteine lipid modification. A lipid anchor (S-diacylglycerol cysteine) is attached at Cys16.

The protein belongs to the InvH family.

It localises to the cell outer membrane. Involved in the synthesis of the type III secretion system (T3SS), also called injectisome, which is used to inject bacterial effector proteins into eukaryotic host cells. Pilot protein that is required for the proper localization of the secretin InvG/SctC in the outer membrane. Necessary for efficient adherence and entry of these organisms into cultured epithelial cells. This chain is SPI-1 type 3 secretion system pilotin, found in Salmonella typhimurium (strain SL1344).